An 838-amino-acid polypeptide reads, in one-letter code: AP-4 complex subunit beta (838 aa).

The interval 582–673 is hinge; the sequence is NSSKQTTSIN…NQNNNQNNNQ (92 aa). Residues 648 to 683 are disordered; that stretch reads ITDGNQNNNQNNNQNNNQNNNQNNNQNNQNNNNQNN. Residues 652-683 show a composition bias toward low complexity; it reads NQNNNQNNNQNNNQNNNQNNNQNNQNNNNQNN. An ear region spans residues 674-838; the sequence is NNQNNNNQNN…LSIPIPKIFN (165 aa).

Belongs to the adaptor complexes large subunit family. May be part of the adaptor protein complex 4 (AP-4), a heterotetramer composed of two large adaptins (epsilon-type subunitand beta-type subunit), a medium adaptin (mu-type subunit) and a small adaptin (sigma-type).

It localises to the golgi apparatus. It is found in the trans-Golgi network membrane. In terms of biological role, probable component of an adaptor protein complex. Adaptor protein complexes are vesicle coat components involved both in vesicle formation and cargo selection. They control the vesicular transport of proteins in different trafficking pathways. The polypeptide is AP-4 complex subunit beta (ap4b1) (Dictyostelium discoideum (Social amoeba)).